We begin with the raw amino-acid sequence, 271 residues long: Acetyl-coenzyme A carboxylase carboxyl transferase subunit alpha (271 aa).

In terms of domain architecture, CoA carboxyltransferase C-terminal spans Met1–Glu247.

It belongs to the AccA family. Acetyl-CoA carboxylase is a heterohexamer composed of biotin carboxyl carrier protein (AccB), biotin carboxylase (AccC) and two subunits each of ACCase subunit alpha (AccA) and ACCase subunit beta (AccD).

It localises to the cytoplasm. It carries out the reaction N(6)-carboxybiotinyl-L-lysyl-[protein] + acetyl-CoA = N(6)-biotinyl-L-lysyl-[protein] + malonyl-CoA. It functions in the pathway lipid metabolism; malonyl-CoA biosynthesis; malonyl-CoA from acetyl-CoA: step 1/1. Functionally, component of the acetyl coenzyme A carboxylase (ACC) complex. First, biotin carboxylase catalyzes the carboxylation of biotin on its carrier protein (BCCP) and then the CO(2) group is transferred by the carboxyltransferase to acetyl-CoA to form malonyl-CoA. The chain is Acetyl-coenzyme A carboxylase carboxyl transferase subunit alpha from Clostridium perfringens (strain 13 / Type A).